Here is a 312-residue protein sequence, read N- to C-terminus: uncharacterized protein (312 aa).

Helical transmembrane passes span 13 to 33 (AAGT…SIWI), 45 to 65 (AVLL…FLIY), 81 to 101 (ACGA…IGLN), 105 to 125 (AMVE…FTAC), 133 to 153 (IQDL…LGGW), 162 to 182 (MIGA…LVLS), 198 to 218 (GMTA…AAGM), 229 to 249 (MYGL…VLML), 260 to 280 (AAAI…LFLG), and 283 to 303 (LGLI…GMEY). In terms of domain architecture, EamA spans 173–303 (AVYAGYLVLS…VFFVITGMEY (131 aa)).

The protein belongs to the EamA transporter family.

It localises to the cell membrane. This is an uncharacterized protein from Bacillus subtilis (strain 168).